Reading from the N-terminus, the 372-residue chain is Neuropeptide S receptor (372 aa).

Over 1-52 the chain is Extracellular; it reads MPANLTEGSFHANQTVPMLDSSPVACTEIVTFTEALEAEEWGSFYSSFKTEQ. Asparagine 4 and asparagine 13 each carry an N-linked (GlcNAc...) asparagine glycan. Residues 53–73 traverse the membrane as a helical segment; that stretch reads LITLWVLFVFTIVGNSVVLFS. The Cytoplasmic portion of the chain corresponds to 74–82; the sequence is TWRRKRKSR. A helical membrane pass occupies residues 83 to 103; that stretch reads MTFFVTQLAITDSFTGLINIL. At 104 to 122 the chain is on the extracellular side; that stretch reads TDIIWRFTGDFMAPDLVCR. Cysteines 121 and 198 form a disulfide. A helical transmembrane segment spans residues 123 to 143; the sequence is IVRYLQVVLLYASTYVLVSLS. The Cytoplasmic segment spans residues 144 to 165; sequence IDRYHAIVYPMKFLQGAEKQAK. A helical membrane pass occupies residues 166-186; it reads VLIGIAWSLSFLFSIPTLIIF. At 187 to 213 the chain is on the extracellular side; the sequence is GKRTLSNGEVQCWALWPDDSYWTPYMT. The helical transmembrane segment at 214-234 threads the bilayer; sequence IVAFLVYFIPLTIISVIYGLV. Topologically, residues 235 to 276 are cytoplasmic; that stretch reads IRTIWIKSKAHETVISNCSDGELCCSYNRGLISKAKIKAIKY. Residues 277-297 traverse the membrane as a helical segment; sequence SIVIILAFICCWSPYFLFDML. Over 298–313 the chain is Extracellular; that stretch reads DNFNLLPDTKERFYAS. Residues 314-334 traverse the membrane as a helical segment; that stretch reads VIIQNLPALNSAINPLIYCIF. Residues 335-372 are Cytoplasmic-facing; sequence SGSLCSPCKVQRSQDSRMTYRERSERHEMQILSKPEFI.

Belongs to the G-protein coupled receptor 1 family. Vasopressin/oxytocin receptor subfamily.

Its subcellular location is the cell membrane. G-protein coupled receptor for neuropeptide S (NPS). Promotes mobilization of intracellular Ca(2+) stores. Inhibits cell growth in response to NPS binding. Involved in pathogenesis of asthma and other IgE-mediated diseases. This chain is Neuropeptide S receptor (Npsr1), found in Rattus norvegicus (Rat).